Here is a 271-residue protein sequence, read N- to C-terminus: Tryptophan synthase alpha chain (271 aa).

Active-site proton acceptor residues include Glu-49 and Asp-60.

Belongs to the TrpA family. Tetramer of two alpha and two beta chains.

The enzyme catalyses (1S,2R)-1-C-(indol-3-yl)glycerol 3-phosphate + L-serine = D-glyceraldehyde 3-phosphate + L-tryptophan + H2O. It functions in the pathway amino-acid biosynthesis; L-tryptophan biosynthesis; L-tryptophan from chorismate: step 5/5. Functionally, the alpha subunit is responsible for the aldol cleavage of indoleglycerol phosphate to indole and glyceraldehyde 3-phosphate. This chain is Tryptophan synthase alpha chain, found in Leptothrix cholodnii (strain ATCC 51168 / LMG 8142 / SP-6) (Leptothrix discophora (strain SP-6)).